A 446-amino-acid chain; its full sequence is Deoxyguanosinetriphosphate triphosphohydrolase-like protein (446 aa).

Residues 1-28 form a disordered region; the sequence is MSSSVWQERRHGEDKQRRNDHRSPFQRD. Basic and acidic residues predominate over residues 7-28; that stretch reads QERRHGEDKQRRNDHRSPFQRD. An HD domain is found at 59–252; the sequence is RLTHSLEVSQ…MELADDIAYA (194 aa).

The protein belongs to the dGTPase family. Type 2 subfamily.

This is Deoxyguanosinetriphosphate triphosphohydrolase-like protein from Shewanella sp. (strain ANA-3).